The following is a 315-amino-acid chain: Transaldolase (315 aa).

Residue Lys131 is the Schiff-base intermediate with substrate of the active site.

This sequence belongs to the transaldolase family. Type 1 subfamily. In terms of assembly, homodimer.

The protein localises to the cytoplasm. The enzyme catalyses D-sedoheptulose 7-phosphate + D-glyceraldehyde 3-phosphate = D-erythrose 4-phosphate + beta-D-fructose 6-phosphate. The protein operates within carbohydrate degradation; pentose phosphate pathway; D-glyceraldehyde 3-phosphate and beta-D-fructose 6-phosphate from D-ribose 5-phosphate and D-xylulose 5-phosphate (non-oxidative stage): step 2/3. In terms of biological role, transaldolase is important for the balance of metabolites in the pentose-phosphate pathway. This Haemophilus ducreyi (strain 35000HP / ATCC 700724) protein is Transaldolase.